The chain runs to 163 residues: Adenosine 5'-monophosphoramidase HINT2 (163 aa).

A mitochondrion-targeting transit peptide spans 1-17; it reads MAAAVVLAAGLRAARRA. One can recognise an HIT domain in the interval 55 to 163; that stretch reads IFSRILDKSL…GGRQLQWPPG (109 aa). Residues S63 and D80 each coordinate AMP. Position 119 is an N6-acetyllysine (K119). N136 contributes to the AMP binding site. K139 is subject to N6-acetyllysine. AMP-binding positions include 142-145 and 149-151; these read AQSV and HIH. The short motif at 147-151 is the Histidine triad motif element; it reads HLHIH. The active-site Tele-AMP-histidine intermediate is H149.

It belongs to the HINT family. High expression in liver and pancreas. Expression is significantly down-regulated in hepatocellular carcinoma (HCC) patients.

It localises to the mitochondrion. It carries out the reaction adenosine 5'-phosphoramidate + H2O = AMP + NH4(+). In terms of biological role, exhibits adenosine 5'-monophosphoramidase activity, hydrolyzing purine nucleotide phosphoramidates with a single phosphate group such as adenosine 5'monophosphoramidate (AMP-NH2) to yield AMP and NH2. Hydrolyzes adenosine 5'-O-p-nitrophenylphosphoramidate (AMP-pNA). Hydrolyzes fluorogenic purine nucleoside tryptamine phosphoramidates in vitro. May be involved in steroid biosynthesis. May play a role in apoptosis. The chain is Adenosine 5'-monophosphoramidase HINT2 from Homo sapiens (Human).